Consider the following 570-residue polypeptide: Proline--tRNA ligase (570 aa).

This sequence belongs to the class-II aminoacyl-tRNA synthetase family. ProS type 1 subfamily. In terms of assembly, homodimer.

The protein resides in the cytoplasm. It carries out the reaction tRNA(Pro) + L-proline + ATP = L-prolyl-tRNA(Pro) + AMP + diphosphate. Its function is as follows. Catalyzes the attachment of proline to tRNA(Pro) in a two-step reaction: proline is first activated by ATP to form Pro-AMP and then transferred to the acceptor end of tRNA(Pro). As ProRS can inadvertently accommodate and process non-cognate amino acids such as alanine and cysteine, to avoid such errors it has two additional distinct editing activities against alanine. One activity is designated as 'pretransfer' editing and involves the tRNA(Pro)-independent hydrolysis of activated Ala-AMP. The other activity is designated 'posttransfer' editing and involves deacylation of mischarged Ala-tRNA(Pro). The misacylated Cys-tRNA(Pro) is not edited by ProRS. The chain is Proline--tRNA ligase from Neisseria meningitidis serogroup C / serotype 2a (strain ATCC 700532 / DSM 15464 / FAM18).